A 153-amino-acid chain; its full sequence is Small ribosomal subunit protein uS9 (153 aa).

Residues 122–153 (KKAGFLTRDPRSTERKKYGLKKARKAPQYSKR) form a disordered region. The span at 129-138 (RDPRSTERKK) shows a compositional bias: basic and acidic residues. The segment covering 139–153 (YGLKKARKAPQYSKR) has biased composition (basic residues).

It belongs to the universal ribosomal protein uS9 family.

The protein is Small ribosomal subunit protein uS9 (rpsI) of Mycobacterium leprae (strain TN).